Reading from the N-terminus, the 1254-residue chain is Receptor tyrosine-protein kinase erbB-2 (1254 aa).

Positions 1–22 are cleaved as a signal peptide; it reads MELAAWCGWGLLLALLSPGASG. Topologically, residues 23–652 are extracellular; sequence TQVCTGTDMK…PAEQRASPAT (630 aa). C26 and C53 form a disulfide bridge. N-linked (GlcNAc...) asparagine glycosylation is found at N68, N125, and N187. 14 disulfides stabilise this stretch: C162-C192, C195-C204, C199-C212, C236-C244, C240-C252, C255-C264, C268-C295, C299-C311, C315-C331, C334-C338, C342-C367, C475-C504, C511-C520, and C515-C528. N-linked (GlcNAc...) asparagine glycosylation is present at N259. Residue N530 is glycosylated (N-linked (GlcNAc...) asparagine). 8 cysteine pairs are disulfide-bonded: C531–C540, C544–C560, C563–C576, C567–C584, C587–C596, C600–C623, C626–C634, and C630–C642. N-linked (GlcNAc...) asparagine glycosylation is present at N571. N-linked (GlcNAc...) asparagine glycosylation occurs at N629. Residues 653-675 traverse the membrane as a helical segment; sequence SIIATVVGILLFLVIGVVVGILI. Residues 676 to 689 are required for interaction with KPNB1 and EEA1; the sequence is KRRRQKIRKYTMRR. The Nuclear localization signal signature appears at 676–689; that stretch reads KRRRQKIRKYTMRR. At 676–1254 the chain is on the cytoplasmic side; it reads KRRRQKIRKY…PEYLGLDVPV (579 aa). The region spanning 720-987 is the Protein kinase domain; sequence LRKVKVLGSG…RMARDPQRFV (268 aa). ATP contacts are provided by residues 726–734 and K753; that span reads LGSGAFGTV. Residue D845 is the Proton acceptor of the active site. Y877 is subject to Phosphotyrosine. 2 disordered regions span residues 1029–1116 and 1133–1179; these read GFFF…SEDP and CSPQ…GKNG. A phosphoserine mark is found at S1054, S1078, S1083, and S1107. Y1112 is modified (phosphotyrosine). Phosphotyrosine; by autocatalysis is present on Y1139. A compositionally biased stretch (pro residues) spans 1146–1161; it reads RPQPPLTPEGPLPPVR. The residue at position 1166 (T1166) is a Phosphothreonine. The interaction with PIK3C2B stretch occupies residues 1195 to 1197; sequence EYL. Y1196 bears the Phosphotyrosine mark. The disordered stretch occupies residues 1223 to 1254; that stretch reads DQDPSERGSPPNTFEGTPTAENPEYLGLDVPV. A compositionally biased stretch (polar residues) spans 1232–1242; sequence PPNTFEGTPTA. Y1247 carries the phosphotyrosine; by autocatalysis modification.

Belongs to the protein kinase superfamily. Tyr protein kinase family. EGF receptor subfamily. In terms of assembly, homodimer. Heterodimer with EGFR, ERBB3 and ERBB4. Part of a complex with EGFR and either PIK3C2A or PIK3C2B. May interact with PIK3C2B when phosphorylated on Tyr-1196. Interacts with PRKCABP and PLXNB1. Interacts (when phosphorylated on Tyr-1247) with MEMO. Interacts with MUC1. Interacts (when phosphorylated on Tyr-1139) with GRB7 (via SH2 domain). Interacts (when phosphorylated on Tyr-1247) with ERBIN. Interacts with SRC, KPNB1, RANBP2, EEA1, CRM1, CLTC, PTK6, RPA194, MYOC and ACTB. Interacts (preferentially with the tyrosine phosphorylated form) with CPNE3; this interaction occurs at the cell membrane and is increased in a growth factor heregulin-dependent manner. Interacts with HSP90AA1 and HSP90AB1 in an ATP-dependent manner; the interaction suppresses ERBB2 kinase activity. Interacts with SORL1; this interaction regulates ERBB2 subcellular distribution by promoting its recycling after internalization from endosomes back to the plasma membrane, hence stimulates ERBB2-mediated signaling. Interacts with SH3BGRL. Interacts with ROR1. Post-translationally, autophosphorylated. Autophosphorylation occurs in trans, i.e. one subunit of the dimeric receptor phosphorylates tyrosine residues on the other subunit. Ligand-binding increases phosphorylation on tyrosine residues. Signaling via SEMA4C promotes phosphorylation at Tyr-1247. Dephosphorylated by PTPN12.

It localises to the cell membrane. The protein localises to the cell projection. It is found in the ruffle membrane. Its subcellular location is the early endosome. The protein resides in the cytoplasm. It localises to the perinuclear region. The protein localises to the nucleus. The catalysed reaction is L-tyrosyl-[protein] + ATP = O-phospho-L-tyrosyl-[protein] + ADP + H(+). In terms of biological role, protein tyrosine kinase that is part of several cell surface receptor complexes, but that apparently needs a coreceptor for ligand binding. Essential component of a neuregulin-receptor complex, although neuregulins do not interact with it alone. GP30 is a potential ligand for this receptor. Regulates outgrowth and stabilization of peripheral microtubules (MTs). Upon ERBB2 activation, the MEMO1-RHOA-DIAPH1 signaling pathway elicits the phosphorylation and thus the inhibition of GSK3B at cell membrane. This prevents the phosphorylation of APC and CLASP2, allowing its association with the cell membrane. In turn, membrane-bound APC allows the localization of MACF1 to the cell membrane, which is required for microtubule capture and stabilization. Its function is as follows. In the nucleus is involved in transcriptional regulation. Associates with the 5'-TCAAATTC-3' sequence in the PTGS2/COX-2 promoter and activates its transcription. Implicated in transcriptional activation of CDKN1A; the function involves STAT3 and SRC. Involved in the transcription of rRNA genes by RNA Pol I and enhances protein synthesis and cell growth. This Mesocricetus auratus (Golden hamster) protein is Receptor tyrosine-protein kinase erbB-2 (ERBB2).